We begin with the raw amino-acid sequence, 1419 residues long: L-2-aminoadipate reductase (1419 aa).

The 77-residue stretch at glutamate 880–lysine 956 folds into the Carrier domain. At serine 916 the chain carries O-(pantetheine 4'-phosphoryl)serine.

Belongs to the ATP-dependent AMP-binding enzyme family. Pantetheine 4'-phosphate is required as a cofactor.

It is found in the cytoplasm. The catalysed reaction is (S)-2-amino-6-oxohexanoate + NADP(+) + H2O = L-2-aminoadipate + NADPH + 2 H(+). It carries out the reaction (S)-2-amino-6-oxohexanoate + NAD(+) + H2O = L-2-aminoadipate + NADH + 2 H(+). It catalyses the reaction (S)-2-amino-6-oxohexanoate + AMP + diphosphate + NADP(+) = L-2-aminoadipate + ATP + NADPH + H(+). It participates in amino-acid biosynthesis; L-lysine biosynthesis via AAA pathway; L-lysine from L-alpha-aminoadipate (fungal route): step 1/3. Functionally, catalyzes the activation of alpha-aminoadipate by ATP-dependent adenylation and the reduction of activated alpha-aminoadipate by NADPH. The activated alpha-aminoadipate is bound to the phosphopantheinyl group of the enzyme itself before it is reduced to (S)-2-amino-6-oxohexanoate. The protein is L-2-aminoadipate reductase (lys1) of Schizosaccharomyces pombe (strain 972 / ATCC 24843) (Fission yeast).